Here is a 220-residue protein sequence, read N- to C-terminus: NADH-quinone oxidoreductase subunit I (220 aa).

4Fe-4S ferredoxin-type domains are found at residues leucine 71–histidine 102 and aspartate 112–arginine 141. [4Fe-4S] cluster contacts are provided by cysteine 82, cysteine 85, cysteine 88, cysteine 92, cysteine 121, cysteine 124, cysteine 127, and cysteine 131. Positions alanine 189–valine 220 are disordered. Over residues proline 198 to threonine 207 the composition is skewed to basic and acidic residues.

It belongs to the complex I 23 kDa subunit family. NDH-1 is composed of 14 different subunits. Subunits NuoA, H, J, K, L, M, N constitute the membrane sector of the complex. [4Fe-4S] cluster serves as cofactor.

It is found in the cell inner membrane. The enzyme catalyses a quinone + NADH + 5 H(+)(in) = a quinol + NAD(+) + 4 H(+)(out). NDH-1 shuttles electrons from NADH, via FMN and iron-sulfur (Fe-S) centers, to quinones in the respiratory chain. The immediate electron acceptor for the enzyme in this species is believed to be ubiquinone. Couples the redox reaction to proton translocation (for every two electrons transferred, four hydrogen ions are translocated across the cytoplasmic membrane), and thus conserves the redox energy in a proton gradient. This Helicobacter acinonychis (strain Sheeba) protein is NADH-quinone oxidoreductase subunit I.